The following is a 217-amino-acid chain: Ribonuclease HII (217 aa).

An RNase H type-2 domain is found at 12–201; sequence DLVAGVDEVG…VRTAHEARAA (190 aa). Residues D18, E19, and D110 each coordinate a divalent metal cation.

The protein belongs to the RNase HII family. Requires Mn(2+) as cofactor. It depends on Mg(2+) as a cofactor.

It localises to the cytoplasm. The catalysed reaction is Endonucleolytic cleavage to 5'-phosphomonoester.. Functionally, endonuclease that specifically degrades the RNA of RNA-DNA hybrids. This is Ribonuclease HII from Pseudomonas syringae pv. tomato (strain ATCC BAA-871 / DC3000).